The primary structure comprises 68 residues: Protein P34 (68 aa).

The next 2 membrane-spanning stretches (helical) occupy residues 4-24 (FVGP…LAVL) and 41-61 (GFSS…GFAM).

Its subcellular location is the virion membrane. This Acinetobacter calcoaceticus (Arthrobacter siderocapsulatus) protein is Protein P34 (XXXIV).